We begin with the raw amino-acid sequence, 339 residues long: MNLAIDVASGEKPLEELVSGAISALQENKDINLILVGNEKNISKAISKTKYDHNRIDIRHTDEIIDMNESPANGIKHKKNASVLLAARLVREKEADGFFSPGNTGATLAAALTEIGRLKGVMRPPLISTLPKLNGEFCMLDMGANVDCTTDYIVQFAVMGRVFAKRYLKIDNPRVGLLNIGEEDSKGNANTKKSFERLQKMKKINFIGNIEPNDMLKSDSVDVVVADGFDGNIVLKTIEGTASFVVNLLKEEVKKNPVSVMGGLMMKPVFNNLKSKMSSDSYGSAILLGLNGGAFVGHGKTSGVGMKNAVLNMYKFLDAKINEKIAKELYDSGAKRRIF.

Belongs to the PlsX family. Homodimer. Probably interacts with PlsY.

The protein resides in the cytoplasm. It catalyses the reaction a fatty acyl-[ACP] + phosphate = an acyl phosphate + holo-[ACP]. It participates in lipid metabolism; phospholipid metabolism. Its function is as follows. Catalyzes the reversible formation of acyl-phosphate (acyl-PO(4)) from acyl-[acyl-carrier-protein] (acyl-ACP). This enzyme utilizes acyl-ACP as fatty acyl donor, but not acyl-CoA. The polypeptide is Phosphate acyltransferase (Brachyspira hyodysenteriae (strain ATCC 49526 / WA1)).